Here is a 394-residue protein sequence, read N- to C-terminus: Probable peptidoglycan glycosyltransferase FtsW (394 aa).

Over 1–26 (MNTMRPRHLNQRGKPVSRPISLYDKW) the chain is Cytoplasmic. A helical transmembrane segment spans residues 27 to 47 (LIGAVFGLLIIGLMMVASSSV). Residues 48–57 (MISTKYFHQP) lie on the Periplasmic side of the membrane. Residues 58-78 (FHFLIRQACYLFVGLLLALIV) traverse the membrane as a helical segment. At 79-88 (VRTDSSFWEK) the chain is on the cytoplasmic side. A helical membrane pass occupies residues 89–109 (ISMPMMIGCVFLLLIVLIPGI). Topologically, residues 110–118 (GKSVNGSRR) are periplasmic. Residues 119–139 (WLALGPIGVQVSELTKLAMIF) form a helical membrane-spanning segment. Over 140–154 (YLSGYLVRQQEAVCE) the chain is Cytoplasmic. Residues 155–175 (SIFGFIKPMAILAVVSVLLLL) form a helical membrane-spanning segment. Residues 176 to 177 (EP) are Periplasmic-facing. Residues 178 to 198 (DFGATVVISGTVMAMLFLAGV) form a helical membrane-spanning segment. At 199–201 (KLR) the chain is on the cytoplasmic side. A helical membrane pass occupies residues 202–222 (YYFGLMLVVVTALALLAVSSP). Topologically, residues 223-278 (YRVARLTAFLDPWADQYNSGYQLTQSLIAFGRGGWFGTGLGESIQKLLYLPEAHTD) are periplasmic. The helical transmembrane segment at 279–299 (FLFAVIAEELGLFGILVVITL) threads the bilayer. Residues 300–327 (YSILVIRGLNIGYTAYTQERHFASYTAY) are Cytoplasmic-facing. Residues 328–348 (GLTIWLALQASINMGVNAGLL) form a helical membrane-spanning segment. The Periplasmic segment spans residues 349 to 354 (PTKGLT). The chain crosses the membrane as a helical span at residues 355–375 (LPLLSYGGASMVINCIVIALL). The Cytoplasmic portion of the chain corresponds to 376 to 394 (LRIDHENRWQSLGLRPLTA).

It belongs to the SEDS family. FtsW subfamily.

It is found in the cell inner membrane. The enzyme catalyses [GlcNAc-(1-&gt;4)-Mur2Ac(oyl-L-Ala-gamma-D-Glu-L-Lys-D-Ala-D-Ala)](n)-di-trans,octa-cis-undecaprenyl diphosphate + beta-D-GlcNAc-(1-&gt;4)-Mur2Ac(oyl-L-Ala-gamma-D-Glu-L-Lys-D-Ala-D-Ala)-di-trans,octa-cis-undecaprenyl diphosphate = [GlcNAc-(1-&gt;4)-Mur2Ac(oyl-L-Ala-gamma-D-Glu-L-Lys-D-Ala-D-Ala)](n+1)-di-trans,octa-cis-undecaprenyl diphosphate + di-trans,octa-cis-undecaprenyl diphosphate + H(+). It participates in cell wall biogenesis; peptidoglycan biosynthesis. Its function is as follows. Peptidoglycan polymerase that is essential for cell division. The sequence is that of Probable peptidoglycan glycosyltransferase FtsW from Legionella pneumophila subsp. pneumophila (strain Philadelphia 1 / ATCC 33152 / DSM 7513).